The chain runs to 41 residues: Large ribosomal subunit protein bL36 (41 aa).

Belongs to the bacterial ribosomal protein bL36 family.

The sequence is that of Large ribosomal subunit protein bL36 from Novosphingobium aromaticivorans (strain ATCC 700278 / DSM 12444 / CCUG 56034 / CIP 105152 / NBRC 16084 / F199).